The following is a 403-amino-acid chain: Probable tRNA sulfurtransferase (403 aa).

Residues 60 to 165 enclose the THUMP domain; it reads KLAEERLKPI…KEGVFLSCRT (106 aa). ATP contacts are provided by residues 183–184, 208–209, R265, G287, and Q296; these read ML and HF.

Belongs to the ThiI family.

The protein localises to the cytoplasm. It carries out the reaction [ThiI sulfur-carrier protein]-S-sulfanyl-L-cysteine + a uridine in tRNA + 2 reduced [2Fe-2S]-[ferredoxin] + ATP + H(+) = [ThiI sulfur-carrier protein]-L-cysteine + a 4-thiouridine in tRNA + 2 oxidized [2Fe-2S]-[ferredoxin] + AMP + diphosphate. The catalysed reaction is [ThiS sulfur-carrier protein]-C-terminal Gly-Gly-AMP + S-sulfanyl-L-cysteinyl-[cysteine desulfurase] + AH2 = [ThiS sulfur-carrier protein]-C-terminal-Gly-aminoethanethioate + L-cysteinyl-[cysteine desulfurase] + A + AMP + 2 H(+). It participates in cofactor biosynthesis; thiamine diphosphate biosynthesis. Its function is as follows. Catalyzes the ATP-dependent transfer of a sulfur to tRNA to produce 4-thiouridine in position 8 of tRNAs, which functions as a near-UV photosensor. Also catalyzes the transfer of sulfur to the sulfur carrier protein ThiS, forming ThiS-thiocarboxylate. This is a step in the synthesis of thiazole, in the thiamine biosynthesis pathway. The sulfur is donated as persulfide by IscS. In Listeria welshimeri serovar 6b (strain ATCC 35897 / DSM 20650 / CCUG 15529 / CIP 8149 / NCTC 11857 / SLCC 5334 / V8), this protein is Probable tRNA sulfurtransferase.